The sequence spans 240 residues: UDP-2,3-diacylglucosamine hydrolase (240 aa).

5 residues coordinate Mn(2+): Asp8, His10, Asp41, Asn79, and His114. A substrate-binding site is contributed by 79 to 80; the sequence is NR. Substrate contacts are provided by Asp122, Ser160, Asn164, Lys167, and His195. Mn(2+) contacts are provided by His195 and His197.

It belongs to the LpxH family. Mn(2+) serves as cofactor.

The protein localises to the cell inner membrane. It catalyses the reaction UDP-2-N,3-O-bis[(3R)-3-hydroxytetradecanoyl]-alpha-D-glucosamine + H2O = 2-N,3-O-bis[(3R)-3-hydroxytetradecanoyl]-alpha-D-glucosaminyl 1-phosphate + UMP + 2 H(+). Its pathway is glycolipid biosynthesis; lipid IV(A) biosynthesis; lipid IV(A) from (3R)-3-hydroxytetradecanoyl-[acyl-carrier-protein] and UDP-N-acetyl-alpha-D-glucosamine: step 4/6. Its function is as follows. Hydrolyzes the pyrophosphate bond of UDP-2,3-diacylglucosamine to yield 2,3-diacylglucosamine 1-phosphate (lipid X) and UMP by catalyzing the attack of water at the alpha-P atom. Involved in the biosynthesis of lipid A, a phosphorylated glycolipid that anchors the lipopolysaccharide to the outer membrane of the cell. In Photorhabdus laumondii subsp. laumondii (strain DSM 15139 / CIP 105565 / TT01) (Photorhabdus luminescens subsp. laumondii), this protein is UDP-2,3-diacylglucosamine hydrolase.